A 312-amino-acid chain; its full sequence is Peroxidase (312 aa).

An N-terminal signal peptide occupies residues 1-23 (MAMGSASCISLVVLVALATAASG). Gln24 is modified (pyrrolidone carboxylic acid). 4 disulfide bridges follow: Cys34/Cys107, Cys67/Cys70, Cys113/Cys307, and Cys192/Cys218. His65 acts as the Proton acceptor in catalysis. Ca(2+)-binding residues include Asp66, Gly69, Asp71, and Ser73. Pro155 serves as a coordination point for substrate. A heme b-binding site is contributed by His185. Residue Thr186 coordinates Ca(2+). Ca(2+) contacts are provided by Asp231, Thr234, and Asp239. The N-linked (GlcNAc...) asparagine glycan is linked to Asn262.

It belongs to the peroxidase family. Classical plant (class III) peroxidase subfamily. It depends on Ca(2+) as a cofactor. The cofactor is heme b. In terms of tissue distribution, root.

Its subcellular location is the secreted. It carries out the reaction 2 a phenolic donor + H2O2 = 2 a phenolic radical donor + 2 H2O. In terms of biological role, removal of H(2)O(2), oxidation of toxic reductants, biosynthesis and degradation of lignin, suberization, auxin catabolism, response to environmental stresses such as wounding, pathogen attack and oxidative stress. These functions might be dependent on each isozyme/isoform in each plant tissue. Involved in defense response to powdery meldew fungus. In Triticum aestivum (Wheat), this protein is Peroxidase.